A 332-amino-acid chain; its full sequence is Autoinducer 2 import system permease protein LsrD (332 aa).

Helical transmembrane passes span 7-27 (YSWE…FGLI), 45-65 (ICIG…GMDI), 70-90 (TIGL…PLPL), 91-111 (AIII…GLII), 118-138 (LVIT…LSGM), 162-182 (FLGI…FWLL), 216-236 (VYAM…SYFG), 240-260 (SDLG…GGAN), 261-281 (IYGG…VGFL), and 288-308 (AGVP…VVVV).

The protein belongs to the binding-protein-dependent transport system permease family. AraH/RbsC subfamily. The complex is composed of two ATP-binding proteins (LsrA), two transmembrane proteins (LsrC and LsrD) and a solute-binding protein (LsrB).

It is found in the cell inner membrane. Functionally, part of the ABC transporter complex LsrABCD involved in autoinducer 2 (AI-2) import. Probably responsible for the translocation of the substrate across the membrane. The polypeptide is Autoinducer 2 import system permease protein LsrD (lsrD) (Salmonella typhi).